The sequence spans 498 residues: Oligopeptide transport system permease protein AmiC (498 aa).

6 helical membrane passes run 12 to 32 (SLVS…TLVP), 279 to 299 (MIVS…ALAV), 316 to 336 (LSTG…VYIV), 359 to 379 (SYVL…AIWI), 415 to 435 (MVPL…GATL), and 461 to 481 (VVGL…LGDI). The ABC transmembrane type-1 domain maps to 280 to 479 (IVSSAITGLI…CISIFSRLLG (200 aa)).

This sequence belongs to the binding-protein-dependent transport system permease family. OppBC subfamily.

The protein localises to the cell membrane. Part of the binding-protein-dependent transport system for oligopeptides; probably responsible for the translocation of the substrate across the membrane. The chain is Oligopeptide transport system permease protein AmiC (amiC) from Streptococcus pneumoniae serotype 4 (strain ATCC BAA-334 / TIGR4).